The primary structure comprises 968 residues: uncharacterized protein (968 aa).

Residues 1–27 (MHSWKKKLVVSQLALACTLAITSQANA) form the signal peptide. Residues 703 to 968 (GLADNGGAWV…SANVGVKYTW (266 aa)) enclose the Autotransporter domain.

This is an uncharacterized protein from Escherichia coli (strain K12).